The primary structure comprises 468 residues: UDP-N-acetylmuramoyl-L-alanine--L-glutamate ligase (468 aa).

ATP is bound at residue 122–128 (GTKGKST).

The protein belongs to the MurCDEF family. MurD2 subfamily.

The protein localises to the cytoplasm. The catalysed reaction is UDP-N-acetyl-alpha-D-muramoyl-L-alanine + L-glutamate + ATP = UDP-N-acetyl-alpha-D-muramoyl-L-alanyl-L-glutamate + ADP + phosphate + H(+). It functions in the pathway cell wall biogenesis; peptidoglycan biosynthesis. Cell wall formation. Catalyzes the addition of L-glutamate to the nucleotide precursor UDP-N-acetylmuramoyl-L-alanine. This chain is UDP-N-acetylmuramoyl-L-alanine--L-glutamate ligase, found in Xylella fastidiosa (strain Temecula1 / ATCC 700964).